A 599-amino-acid chain; its full sequence is Potassium-transporting ATPase potassium-binding subunit (599 aa).

12 helical membrane passes run 8 to 28 (LLAL…IWLA), 61 to 81 (WQYA…VYAL), 133 to 153 (ALAV…FALF), 176 to 196 (AWLL…NGVI), 280 to 300 (LTNF…CFAF), 311 to 331 (WAVL…ITPA), 366 to 386 (INAS…AVIA), 391 to 411 (FTPL…VVFG), 416 to 436 (GLYG…LMIG), 456 to 476 (IAIL…VLAG), 521 to 541 (LLGL…LAIA), and 563 to 583 (LFVL…YVPA).

Belongs to the KdpA family. The system is composed of three essential subunits: KdpA, KdpB and KdpC.

It is found in the cell inner membrane. Its function is as follows. Part of the high-affinity ATP-driven potassium transport (or Kdp) system, which catalyzes the hydrolysis of ATP coupled with the electrogenic transport of potassium into the cytoplasm. This subunit binds the periplasmic potassium ions and delivers the ions to the membrane domain of KdpB through an intramembrane tunnel. This is Potassium-transporting ATPase potassium-binding subunit from Polaromonas naphthalenivorans (strain CJ2).